A 161-amino-acid polypeptide reads, in one-letter code: Phosphopantetheine adenylyltransferase (161 aa).

Ser-9 lines the substrate pocket. ATP contacts are provided by residues Ser-9 to Phe-10 and His-17. Residues Lys-41, Leu-73, and Arg-87 each contribute to the substrate site. ATP is bound by residues Gly-88–Arg-90, Glu-98, and Tyr-123–Ser-129.

The protein belongs to the bacterial CoaD family. In terms of assembly, homohexamer. Mg(2+) is required as a cofactor.

It is found in the cytoplasm. The catalysed reaction is (R)-4'-phosphopantetheine + ATP + H(+) = 3'-dephospho-CoA + diphosphate. It functions in the pathway cofactor biosynthesis; coenzyme A biosynthesis; CoA from (R)-pantothenate: step 4/5. Its function is as follows. Reversibly transfers an adenylyl group from ATP to 4'-phosphopantetheine, yielding dephospho-CoA (dPCoA) and pyrophosphate. The chain is Phosphopantetheine adenylyltransferase from Syntrophomonas wolfei subsp. wolfei (strain DSM 2245B / Goettingen).